The sequence spans 289 residues: Fatty acid elongase 1 (289 aa).

Helical transmembrane passes span 22-42, 72-92, 123-143, 152-172, 177-197, 208-228, and 251-271; these read VVGY…KLFA, AMVL…STVT, FWIG…IFLV, FLHW…YCVG, IWVA…FAIA, WAPY…FVTL, and LLMY…AHVL. Residues 154–158 carry the HxxHH motif motif; the sequence is HWYHH. Histidine 157 functions as the Nucleophile in the catalytic mechanism. A glycan (N-linked (GlcNAc...) asparagine) is linked at asparagine 282.

The protein belongs to the ELO family.

The protein resides in the endoplasmic reticulum membrane. The catalysed reaction is an acyl-CoA + malonyl-CoA + H(+) = a 3-oxoacyl-CoA + CO2 + CoA. It functions in the pathway lipid metabolism; fatty acid biosynthesis. Functionally, involved in the synthesis of fatty acids. Elongates C4 fatty acids. Required for the normal mitochondrial function, energy metabolism and growth of epimastigotes. This Trypanosoma cruzi (strain CL Brener) protein is Fatty acid elongase 1.